The following is a 502-amino-acid chain: Glycerol kinase (502 aa).

Thr13 lines the ADP pocket. ATP-binding residues include Thr13, Thr14, and Ser15. Thr13 is a binding site for sn-glycerol 3-phosphate. Residue Arg17 coordinates ADP. Sn-glycerol 3-phosphate is bound by residues Arg83, Glu84, Tyr135, and Asp245. 5 residues coordinate glycerol: Arg83, Glu84, Tyr135, Asp245, and Gln246. Positions 267 and 310 each coordinate ADP. ATP-binding residues include Thr267, Gly310, Gln314, and Gly411. 2 residues coordinate ADP: Gly411 and Asn415.

It belongs to the FGGY kinase family. Homotetramer and homodimer (in equilibrium).

The catalysed reaction is glycerol + ATP = sn-glycerol 3-phosphate + ADP + H(+). It participates in polyol metabolism; glycerol degradation via glycerol kinase pathway; sn-glycerol 3-phosphate from glycerol: step 1/1. Activated by phosphorylation and inhibited by fructose 1,6-bisphosphate (FBP). Key enzyme in the regulation of glycerol uptake and metabolism. Catalyzes the phosphorylation of glycerol to yield sn-glycerol 3-phosphate. This Lactobacillus delbrueckii subsp. bulgaricus (strain ATCC BAA-365 / Lb-18) protein is Glycerol kinase.